The primary structure comprises 285 residues: Undecaprenyl-diphosphatase (285 aa).

A run of 7 helical transmembrane segments spans residues 40–60, 92–112, 122–142, 159–179, 197–217, 233–253, and 259–279; these read DELL…LLYF, LCIL…ENFI, SVYA…WADA, FLIG…RSGI, FSML…LLGL, LIVA…LMAL, and FLPF…TSPI.

The protein belongs to the UppP family.

It localises to the cell inner membrane. The enzyme catalyses di-trans,octa-cis-undecaprenyl diphosphate + H2O = di-trans,octa-cis-undecaprenyl phosphate + phosphate + H(+). Functionally, catalyzes the dephosphorylation of undecaprenyl diphosphate (UPP). Confers resistance to bacitracin. The protein is Undecaprenyl-diphosphatase of Hyphomonas neptunium (strain ATCC 15444).